A 1076-amino-acid polypeptide reads, in one-letter code: Zinc-regulated protein 8 (1076 aa).

Over residues 1–11 the composition is skewed to basic residues; it reads MRSFIKAHKKS. 4 disordered regions span residues 1 to 66, 85 to 162, 190 to 223, and 234 to 253; these read MRSF…PGFE, SNLN…RTTD, PASP…TSPS, and KNKG…SSKK. Residues 23–34 show a composition bias toward polar residues; that stretch reads NFSGNTNNSSQR. Low complexity predominate over residues 93 to 106; sequence STPTTSTNQTTSNS. The segment covering 107–117 has biased composition (polar residues); that stretch reads FVLQNPPTKNT. Positions 118–128 are enriched in pro residues; that stretch reads GPPPPLPPPLF. Polar residues-rich tracts occupy residues 193–206 and 214–223; these read PASN…SKQF and ENLTSTTSPS. Residues Ser275 and Ser354 each carry the phosphoserine modification. Disordered regions lie at residues 357–450, 534–557, and 566–585; these read IRHG…DDES, LSDD…ESDN, and GKET…SLGE. A compositionally biased stretch (polar residues) spans 362–378; sequence LQSSPSKVNKNDSQNET. Ser403 and Ser407 each carry phosphoserine. Positions 408-418 are enriched in basic and acidic residues; it reads VNEKETHKAND. Residues 419–450 are compositionally biased toward acidic residues; it reads CNDESSENGDGDNDHDDDYDDDDDDDDDDDES. Residues 576-585 show a composition bias toward basic and acidic residues; it reads GHHDDASLGE. A phosphoserine mark is found at Ser632 and Ser676. 5 disordered regions span residues 658-701, 713-762, 909-931, 1000-1020, and 1042-1076; these read NIIR…KPTV, SASD…PHSQ, RRTL…FSSV, HNVG…QISN, and PTNS…PKRA. Composition is skewed to polar residues over residues 690–701 and 739–748; these read LTGTTGSTKPTV and QVSLQSSLYE.

It belongs to the ZRG8 family. As to quaternary structure, interacts with BUD27, GIS1 and SSD1.

It localises to the cytoplasm. It is found in the bud. The protein resides in the bud neck. The protein localises to the bud tip. In terms of biological role, involved in the integrity functions of RAM, a conserved signaling network that regulates maintenance of polarized growth and daughter-cell-specific transcription. The sequence is that of Zinc-regulated protein 8 (ZRG8) from Saccharomyces cerevisiae (strain ATCC 204508 / S288c) (Baker's yeast).